A 152-amino-acid polypeptide reads, in one-letter code: Large ribosomal subunit protein uL13 (152 aa).

It belongs to the universal ribosomal protein uL13 family. As to quaternary structure, part of the 50S ribosomal subunit.

This protein is one of the early assembly proteins of the 50S ribosomal subunit, although it is not seen to bind rRNA by itself. It is important during the early stages of 50S assembly. This is Large ribosomal subunit protein uL13 from Borreliella afzelii (strain PKo) (Borrelia afzelii).